The sequence spans 126 residues: Small ribosomal subunit protein uS13 (126 aa).

The disordered stretch occupies residues 95 to 126 (GMPVRGQRTRTNARTRRGRRGQAIGIKKKVKK).

Belongs to the universal ribosomal protein uS13 family. In terms of assembly, part of the 30S ribosomal subunit. Forms a loose heterodimer with protein S19. Forms two bridges to the 50S subunit in the 70S ribosome.

Functionally, located at the top of the head of the 30S subunit, it contacts several helices of the 16S rRNA. In the 70S ribosome it contacts the 23S rRNA (bridge B1a) and protein L5 of the 50S subunit (bridge B1b), connecting the 2 subunits; these bridges are implicated in subunit movement. Contacts the tRNAs in the A and P-sites. The protein is Small ribosomal subunit protein uS13 of Chloroflexus aggregans (strain MD-66 / DSM 9485).